Consider the following 698-residue polypeptide: Pheromone-regulated protein PRM7 (698 aa).

Disordered regions lie at residues 1–65 (MYRT…IGNS), 133–183 (ESTT…SAVT), 197–274 (SVDQ…TVTI), and 455–480 (SASS…DSKT). Low complexity-rich tracts occupy residues 9–56 (EVTT…TTSA) and 158–183 (VTTS…SAVT). A compositionally biased stretch (low complexity) spans 455–465 (SASSSRSSATS).

This chain is Pheromone-regulated protein PRM7 (PRM7), found in Saccharomyces cerevisiae (strain ATCC 204508 / S288c) (Baker's yeast).